A 296-amino-acid polypeptide reads, in one-letter code: ATP synthase gamma chain (296 aa).

The protein belongs to the ATPase gamma chain family. As to quaternary structure, F-type ATPases have 2 components, CF(1) - the catalytic core - and CF(0) - the membrane proton channel. CF(1) has five subunits: alpha(3), beta(3), gamma(1), delta(1), epsilon(1). CF(0) has three main subunits: a, b and c.

Its subcellular location is the cell membrane. Functionally, produces ATP from ADP in the presence of a proton gradient across the membrane. The gamma chain is believed to be important in regulating ATPase activity and the flow of protons through the CF(0) complex. The chain is ATP synthase gamma chain from Pseudarthrobacter chlorophenolicus (strain ATCC 700700 / DSM 12829 / CIP 107037 / JCM 12360 / KCTC 9906 / NCIMB 13794 / A6) (Arthrobacter chlorophenolicus).